The following is a 376-amino-acid chain: N-acetyldiaminopimelate deacetylase (376 aa).

The active site involves D69. E128 acts as the Proton acceptor in catalysis.

The protein belongs to the peptidase M20A family. N-acetyldiaminopimelate deacetylase subfamily.

The enzyme catalyses N-acetyl-(2S,6S)-2,6-diaminopimelate + H2O = (2S,6S)-2,6-diaminopimelate + acetate. It functions in the pathway amino-acid biosynthesis; L-lysine biosynthesis via DAP pathway; LL-2,6-diaminopimelate from (S)-tetrahydrodipicolinate (acetylase route): step 3/3. In terms of biological role, catalyzes the conversion of N-acetyl-diaminopimelate to diaminopimelate and acetate. This Bacillus cereus (strain AH820) protein is N-acetyldiaminopimelate deacetylase.